A 1547-amino-acid polypeptide reads, in one-letter code: Tubby-related protein 4 (1547 aa).

WD repeat units lie at residues 80-119 (GHNS…WSVE), 123-162 (DRGA…HWSS), and 165-204 (NLES…LAHV). Residues 364-414 (ALYVVRVEHRVSSLQLLCQQAIASTLREDKDVNKLTLPPRLCSYLSTAFIP) form the SOCS box domain. The tract at residues 530–580 (SPKISRSSKSPKLPRISIEARKSPKLPRAAQEISRSPRLPMRKPSMGSPSL) is disordered. Residues 533–546 (ISRSSKSPKLPRIS) show a composition bias toward low complexity. Serine 577 is modified (phosphoserine). Arginine 949 and arginine 954 each carry asymmetric dimethylarginine. Phosphoserine occurs at positions 1347 and 1378. The interval 1374-1414 (SLISSPRLGREKKKVKSQKDQLKSKKLNKTNEFQDSSESEP) is disordered. The interval 1436–1547 (SKRSLRTASE…ALANVTQRLK (112 aa)) is TUB.

Belongs to the TUB family.

The protein localises to the cytoplasm. It functions in the pathway protein modification; protein ubiquitination. Functionally, may be a substrate-recognition component of a SCF-like ECS (Elongin-Cullin-SOCS-box protein) E3 ubiquitin ligase complex which mediates the ubiquitination and subsequent proteasomal degradation of target proteins. The polypeptide is Tubby-related protein 4 (Tulp4) (Mus musculus (Mouse)).